The primary structure comprises 230 residues: Protein LURP-one-related 11 (230 aa).

This sequence belongs to the LOR family.

In terms of biological role, might be related to the phospholipid scramblase and tubby-like superfamily of membrane tethered transcription factors. The chain is Protein LURP-one-related 11 from Arabidopsis thaliana (Mouse-ear cress).